A 918-amino-acid chain; its full sequence is MGKKRIYELAKEINVSSKDIIEKAQADGLDVKNHMSTLDDASEKHLRNAFKKNTTTTKPEEKRTPKFRSSKTGKTVVKKSDHPAADGTKGIQRLKSSNNESTTRNNNNNKNGNQNRNNTNGRPNNNQNRPNNNRNQNNNRNGNRPNQPKRDEKQDRIRASVAEAARMAAQANREIANEKPQANRQRTNSAKPGEQRREGRNNQNRPNNNNRNGNNVNRTNNNNRPNNNNRNNENRPSRPNNTNQTTNNRPANNTTRPAAPAATTANNSGEKKQDRFSGRNNNSRGGNRFGNNQNRPFNKENRKNKKRNRKAKRDGRMKETTNKVVTVRKERPLPDVLEYSEGINVAEIAKKIHREPAEIIKKLFMMGVMVNQNQSLDNDTVELLAADYGIEAQQKVEVDISDIDKIFEDEEKNTTNLVSRPPVVTIMGHVDHGKTTLLDKLRHSHITEGEAGGITQGIGAYQLKHDDKLITFLDTPGHAAFTEMRARGADVTDITILVVAADDGVMPQTIEAINHAKAANVPIIVAVNKIDKQGANPNHVMEQLTEYGLIPESWGGDTIFVEISAKLGQNIDELLDMILLQAEVLELKANPDQNAAGSVIEAQLDPGKGSIATILVQQGTMHVGDPIVIGNTFGRIRTMVNEHGRRVKEATPSTPVEITGLNGVPEAGDRFVVFDDEKSARAAGEERAKRAQMEERKRSNHVTLDNLFDSLKEGEMKKVDIIIKADVQGSVEALADSLQKIEVEGVRVNIIHKAVGAINESDVTLAAASNAIIIGFNVRPTAQAKQMADSEDVDIRLHRVIYNAIDEVESAMKGMLEPVYEEEIIGQVDIRETYKVSRVGTIAGGFVTEGFITRDSGVRLIRDGVVIYEGKLGSLKRFKDDVKEVKRGFELGLTVENYNDIKIGDVIEAYRMKEVPVE.

The disordered stretch occupies residues 39 to 321 (DDASEKHLRN…KRDGRMKETT (283 aa)). Positions 95–146 (KSSNNESTTRNNNNNKNGNQNRNNTNGRPNNNQNRPNNNRNQNNNRNGNRPN) are enriched in low complexity. A compositionally biased stretch (basic and acidic residues) spans 148-158 (PKRDEKQDRIR). Residues 159 to 174 (ASVAEAARMAAQANRE) are compositionally biased toward low complexity. A compositionally biased stretch (polar residues) spans 180–190 (PQANRQRTNSA). Low complexity-rich tracts occupy residues 201-231 (NNQN…NNRN), 237-267 (SRPN…TANN), and 278-296 (GRNN…QNRP). Basic residues predominate over residues 302 to 313 (RKNKKRNRKAKR). The 170-residue stretch at 419–588 (SRPPVVTIMG…LLQAEVLELK (170 aa)) folds into the tr-type G domain. The tract at residues 428–435 (GHVDHGKT) is G1. Residue 428 to 435 (GHVDHGKT) participates in GTP binding. The G2 stretch occupies residues 453–457 (GITQG). Residues 474-477 (DTPG) form a G3 region. GTP is bound by residues 474 to 478 (DTPGH) and 528 to 531 (NKID). A G4 region spans residues 528 to 531 (NKID). A G5 region spans residues 564 to 566 (SAK).

It belongs to the TRAFAC class translation factor GTPase superfamily. Classic translation factor GTPase family. IF-2 subfamily.

The protein resides in the cytoplasm. Functionally, one of the essential components for the initiation of protein synthesis. Protects formylmethionyl-tRNA from spontaneous hydrolysis and promotes its binding to the 30S ribosomal subunits. Also involved in the hydrolysis of GTP during the formation of the 70S ribosomal complex. This Pediococcus pentosaceus (strain ATCC 25745 / CCUG 21536 / LMG 10740 / 183-1w) protein is Translation initiation factor IF-2.